The chain runs to 729 residues: Glycerophosphodiester phosphodiesterase GDPDL5 (729 aa).

The first 22 residues, 1–22, serve as a signal peptide directing secretion; it reads MACPRVIFLILITFFILQTAFS. 2 GP-PDE domains span residues 33–320 and 337–645; these read PAVI…YRAI and ITII…ARYR. N-linked (GlcNAc...) asparagine glycans are attached at residues N88, N162, N218, N227, N285, N302, N390, N401, and N507. Residues 709–729 form a helical membrane-spanning segment; sequence AIEVPFAFIAMAILVCFFISV.

Belongs to the glycerophosphoryl diester phosphodiesterase family. Expressed in stems, flowers and siliques.

Its subcellular location is the membrane. The catalysed reaction is a sn-glycero-3-phosphodiester + H2O = an alcohol + sn-glycerol 3-phosphate + H(+). The polypeptide is Glycerophosphodiester phosphodiesterase GDPDL5 (Arabidopsis thaliana (Mouse-ear cress)).